Reading from the N-terminus, the 805-residue chain is Translation initiation factor IF-2 (805 aa).

Disordered stretches follow at residues 68–89 (VVTE…EKKE) and 141–215 (KEKE…KEKK). A compositionally biased stretch (basic and acidic residues) spans 79 to 89 (VEEKKEEEKKE). The region spanning 306 to 474 (PRPPIVVVMG…MILLLADILE (169 aa)) is the tr-type G domain. The segment at 315–322 (GHVDHGKT) is G1. Residue 315–322 (GHVDHGKT) participates in GTP binding. Residues 340–344 (GITQH) are G2. The G3 stretch occupies residues 362–365 (DTPG). GTP contacts are provided by residues 362 to 366 (DTPGH) and 416 to 419 (NKID). The tract at residues 416–419 (NKID) is G4. Positions 452–454 (SAK) are G5.

The protein belongs to the TRAFAC class translation factor GTPase superfamily. Classic translation factor GTPase family. IF-2 subfamily.

It is found in the cytoplasm. One of the essential components for the initiation of protein synthesis. Protects formylmethionyl-tRNA from spontaneous hydrolysis and promotes its binding to the 30S ribosomal subunits. Also involved in the hydrolysis of GTP during the formation of the 70S ribosomal complex. This is Translation initiation factor IF-2 (infB) from Aquifex aeolicus (strain VF5).